Consider the following 304-residue polypeptide: Homoserine kinase (304 aa).

86-96 (PLARGLGSSAA) contributes to the ATP binding site.

It belongs to the GHMP kinase family. Homoserine kinase subfamily.

The protein resides in the cytoplasm. It carries out the reaction L-homoserine + ATP = O-phospho-L-homoserine + ADP + H(+). It functions in the pathway amino-acid biosynthesis; L-threonine biosynthesis; L-threonine from L-aspartate: step 4/5. In terms of biological role, catalyzes the ATP-dependent phosphorylation of L-homoserine to L-homoserine phosphate. This is Homoserine kinase from Carboxydothermus hydrogenoformans (strain ATCC BAA-161 / DSM 6008 / Z-2901).